We begin with the raw amino-acid sequence, 235 residues long: tRNA (guanine-N(1)-)-methyltransferase (235 aa).

Residues Gly-112 and 131-136 contribute to the S-adenosyl-L-methionine site; that span reads LGDFVL.

The protein belongs to the RNA methyltransferase TrmD family. In terms of assembly, homodimer.

It is found in the cytoplasm. It catalyses the reaction guanosine(37) in tRNA + S-adenosyl-L-methionine = N(1)-methylguanosine(37) in tRNA + S-adenosyl-L-homocysteine + H(+). In terms of biological role, specifically methylates guanosine-37 in various tRNAs. The sequence is that of tRNA (guanine-N(1)-)-methyltransferase from Synechococcus elongatus (strain ATCC 33912 / PCC 7942 / FACHB-805) (Anacystis nidulans R2).